A 220-amino-acid polypeptide reads, in one-letter code: Putative NAD(P)H nitroreductase (220 aa).

Residue 155 to 160 (GASALG) coordinates NAD(+).

This sequence belongs to the nitroreductase family. Requires FMN as cofactor.

This Haemophilus influenzae (strain ATCC 51907 / DSM 11121 / KW20 / Rd) protein is Putative NAD(P)H nitroreductase.